Consider the following 86-residue polypeptide: Progonadoliberin-2 (86 aa).

Positions 1–24 (MVSVCRLLLVAALLLCLQAQLSFS) are cleaved as a signal peptide. Residue Gln-25 is modified to Pyrrolidone carboxylic acid. Gly-34 is subject to Glycine amide.

This sequence belongs to the GnRH family.

Its subcellular location is the secreted. Stimulates the secretion of gonadotropins. The chain is Progonadoliberin-2 (gnrh2) from Clarias gariepinus (North African catfish).